Here is a 650-residue protein sequence, read N- to C-terminus: Chaperone protein DnaK (650 aa).

A Phosphothreonine; by autocatalysis modification is found at Thr200. Low complexity predominate over residues 612-632 (GEGATAGAAAGAGAAGGQQAQ). Positions 612–650 (GEGATAGAAAGAGAAGGQQAQPQDDNVVDAEFKEVNDKK) are disordered. A compositionally biased stretch (basic and acidic residues) spans 641–650 (AEFKEVNDKK).

The protein belongs to the heat shock protein 70 family.

In terms of biological role, acts as a chaperone. This chain is Chaperone protein DnaK, found in Cupriavidus necator (strain ATCC 17699 / DSM 428 / KCTC 22496 / NCIMB 10442 / H16 / Stanier 337) (Ralstonia eutropha).